The following is an 862-amino-acid chain: Probable disease resistance protein At5g43740 (862 aa).

The stretch at 24–61 (RNYIHMMESNLDALQKTMEELKNGRDDLLGRVSIEEDK) forms a coiled coil. Residues 135–438 (MVAQEIIHKV…CEGFINPNRY (304 aa)) enclose the NB-ARC domain. 178 to 185 (GMGGVGKT) serves as a coordination point for ATP. LRR repeat units lie at residues 511–532 (IVRT…SKCP), 533–555 (NLST…FFRF), 558–580 (KLVV…ISNL), and 582–604 (SLQY…KKLR).

This sequence belongs to the disease resistance NB-LRR family.

In terms of biological role, probable disease resistance protein. This is Probable disease resistance protein At5g43740 from Arabidopsis thaliana (Mouse-ear cress).